The chain runs to 492 residues: Catalase isozyme 1 (492 aa).

Catalysis depends on residues His-65 and Asn-138. Tyr-348 provides a ligand contact to heme.

The protein belongs to the catalase family. As to quaternary structure, homotetramer. Heme is required as a cofactor. Scutella, milky endosperm of immature kernels, leaves and epicotyls.

The protein localises to the peroxisome. The catalysed reaction is 2 H2O2 = O2 + 2 H2O. Functionally, occurs in almost all aerobically respiring organisms and serves to protect cells from the toxic effects of hydrogen peroxide. In Zea mays (Maize), this protein is Catalase isozyme 1 (CAT1).